The following is a 414-amino-acid chain: uncharacterized protein (414 aa).

This sequence belongs to the glycosyltransferase 28 family.

This is an uncharacterized protein from Mycobacterium tuberculosis (strain CDC 1551 / Oshkosh).